A 305-amino-acid chain; its full sequence is uncharacterized protein (305 aa).

Residues Met1–Val29 form the signal peptide.

This is an uncharacterized protein from Archaeoglobus fulgidus (strain ATCC 49558 / DSM 4304 / JCM 9628 / NBRC 100126 / VC-16).